Here is a 1291-residue protein sequence, read N- to C-terminus: DNA-directed RNA polymerase subunit beta (1291 aa).

Belongs to the RNA polymerase beta chain family. In terms of assembly, the RNAP catalytic core consists of 2 alpha, 1 beta, 1 beta' and 1 omega subunit. When a sigma factor is associated with the core the holoenzyme is formed, which can initiate transcription.

It catalyses the reaction RNA(n) + a ribonucleoside 5'-triphosphate = RNA(n+1) + diphosphate. In terms of biological role, DNA-dependent RNA polymerase catalyzes the transcription of DNA into RNA using the four ribonucleoside triphosphates as substrates. The sequence is that of DNA-directed RNA polymerase subunit beta from Cytophaga hutchinsonii (strain ATCC 33406 / DSM 1761 / CIP 103989 / NBRC 15051 / NCIMB 9469 / D465).